Reading from the N-terminus, the 124-residue chain is Acidic phospholipase A2 BA2 (124 aa).

Cystine bridges form between cysteine 26–cysteine 116, cysteine 28–cysteine 44, cysteine 43–cysteine 95, cysteine 49–cysteine 124, cysteine 50–cysteine 88, cysteine 57–cysteine 81, and cysteine 75–cysteine 86. Ca(2+)-binding residues include tyrosine 27, glycine 29, and glycine 31. Histidine 47 is an active-site residue. A Ca(2+)-binding site is contributed by aspartate 48. Residue aspartate 89 is part of the active site.

Belongs to the phospholipase A2 family. Group II subfamily. D49 sub-subfamily. Requires Ca(2+) as cofactor. Expressed by the venom gland.

Its subcellular location is the secreted. It carries out the reaction a 1,2-diacyl-sn-glycero-3-phosphocholine + H2O = a 1-acyl-sn-glycero-3-phosphocholine + a fatty acid + H(+). Its function is as follows. PLA2 catalyzes the calcium-dependent hydrolysis of the 2-acyl groups in 3-sn-phosphoglycerides. This chain is Acidic phospholipase A2 BA2, found in Gloydius halys (Chinese water mocassin).